Here is a 181-residue protein sequence, read N- to C-terminus: DFVLDNEGNPLSNGGTYYILSDITAFGGIRAAPTGNERCPLTVVQSRNELDKGIGTIISSPFRIRFIAEGNPLRLKFDSFAVIMLCVGIPTEWSVVEDLPEGPAVKIGENKDAVDGWFRIERVSDDEFNNYKLVFCTQQAEDDKCGDIGISIDHDDGTRRLVVSKNKPLVVQFQKVDKESL.

Cystine bridges form between cysteine 39/cysteine 86 and cysteine 136/cysteine 145.

It belongs to the protease inhibitor I3 (leguminous Kunitz-type inhibitor) family.

Functionally, inhibition of trypsin. This is Trypsin inhibitor B from Glycine max (Soybean).